Reading from the N-terminus, the 148-residue chain is UPF0251 protein Cbei_2962 (148 aa).

It belongs to the UPF0251 family.

This chain is UPF0251 protein Cbei_2962, found in Clostridium beijerinckii (strain ATCC 51743 / NCIMB 8052) (Clostridium acetobutylicum).